The following is a 103-amino-acid chain: Cytotoxin-like protein TA-BMBGT3 (103 aa).

The first 21 residues, 1-21, serve as a signal peptide directing secretion; that stretch reads MKTLLLTLVVVTIICLDLGYT. Disulfide bonds link C24/C45, C27/C37, C38/C72, C76/C90, and C91/C96.

Belongs to the three-finger toxin family. Ancestral subfamily. Orphan group XVII sub-subfamily. In terms of tissue distribution, expressed by the venom gland.

It localises to the secreted. In Bungarus multicinctus (Many-banded krait), this protein is Cytotoxin-like protein TA-BMBGT3.